The chain runs to 293 residues: ATP synthase gamma chain (293 aa).

The protein belongs to the ATPase gamma chain family. F-type ATPases have 2 components, CF(1) - the catalytic core - and CF(0) - the membrane proton channel. CF(1) has five subunits: alpha(3), beta(3), gamma(1), delta(1), epsilon(1). CF(0) has three main subunits: a, b and c.

It is found in the cell inner membrane. Functionally, produces ATP from ADP in the presence of a proton gradient across the membrane. The gamma chain is believed to be important in regulating ATPase activity and the flow of protons through the CF(0) complex. The sequence is that of ATP synthase gamma chain from Psychrobacter cryohalolentis (strain ATCC BAA-1226 / DSM 17306 / VKM B-2378 / K5).